Here is a 283-residue protein sequence, read N- to C-terminus: MTAQVISGSALAKKVKTEVGQKIEQYVAQGKRAPGLAVILVGADPASQVYVGSKRKSCAEIGINSKSYDLEESTSEAALLTLIDELNNDADIDGILVQLPLPKHIDSTKVIERIAPHKDVDGFHPYNVGRLCQRIPTLRACTPYGIMKLLETTELNLKGRHAVIVGASNIVGRPMAMELLLAGCTVTVTHRFTTNLEGYVRQADILVVAVGKAEFIPGNWVKEGAVVIDVGINRCEDGKLRGDVEFAAAAEKAGFITPVPGGVGPMTVAMLMFNTLTAYENNG.

Residues 166 to 168 and isoleucine 232 contribute to the NADP(+) site; that span reads GAS.

This sequence belongs to the tetrahydrofolate dehydrogenase/cyclohydrolase family. As to quaternary structure, homodimer.

The catalysed reaction is (6R)-5,10-methylene-5,6,7,8-tetrahydrofolate + NADP(+) = (6R)-5,10-methenyltetrahydrofolate + NADPH. It catalyses the reaction (6R)-5,10-methenyltetrahydrofolate + H2O = (6R)-10-formyltetrahydrofolate + H(+). The protein operates within one-carbon metabolism; tetrahydrofolate interconversion. Its function is as follows. Catalyzes the oxidation of 5,10-methylenetetrahydrofolate to 5,10-methenyltetrahydrofolate and then the hydrolysis of 5,10-methenyltetrahydrofolate to 10-formyltetrahydrofolate. This Mannheimia succiniciproducens (strain KCTC 0769BP / MBEL55E) protein is Bifunctional protein FolD.